Reading from the N-terminus, the 113-residue chain is Iron-sulfur cluster insertion protein ErpA (113 aa).

Iron-sulfur cluster contacts are provided by cysteine 41, cysteine 105, and cysteine 107.

The protein belongs to the HesB/IscA family. In terms of assembly, homodimer. Requires iron-sulfur cluster as cofactor.

Its function is as follows. Required for insertion of 4Fe-4S clusters for at least IspG. The polypeptide is Iron-sulfur cluster insertion protein ErpA (Histophilus somni (strain 129Pt) (Haemophilus somnus)).